Here is a 513-residue protein sequence, read N- to C-terminus: uncharacterized protein (513 aa).

Over residues 1 to 16 (MPREHDSKYHRERDMR) the composition is skewed to basic and acidic residues. Residues 1–21 (MPREHDSKYHRERDMRSGLQE) are disordered.

This is an uncharacterized protein from Sinorhizobium fredii (strain NBRC 101917 / NGR234).